A 615-amino-acid polypeptide reads, in one-letter code: Ras association domain-containing protein 1 homolog (615 aa).

Disordered regions lie at residues 1 to 29 (MLRS…PTYQ) and 69 to 89 (SDDE…QSIG). A compositionally biased stretch (low complexity) spans 76 to 87 (TSSTSSPQSEQS). The segment at 164–214 (NHSFKTHSLLHPTWCDKCGDFIWGILKEALKCEHCNYTCHARCRDLVTLDC) adopts a Phorbol-ester/DAG-type zinc-finger fold. Residues 249–268 (PAMSSSTGSDKENGNGNSAG) form a disordered region. Positions 251 to 268 (MSSSTGSDKENGNGNSAG) are enriched in polar residues. Residues 396 to 496 (KTTSLRTITS…RALVLQENDT (101 aa)) form the Ras-associating domain. Positions 498–545 (DILWDAFEIPELENFLRILGMEEKQYVFQTQQKYQQYRYHLDAELRQR) constitute an SARAH domain.

As to quaternary structure, interacts with rab-39 (GTP-bound form). Interacts (via SARAH domain) with cst-1; the interaction is required for the phosphorylation of cst-1. Expressed in the pharynx, epithelial cells, ciliated neurons in the head, body wall muscles, hypodermis, vulva, gonadal sheath cells, tail hypodermis and in coelomocytes. As to expression, expressed in the pharynx, neurons and vulva.

Its subcellular location is the cytoplasm. The protein resides in the cytoskeleton. Functionally, involved in embryonic morphogenesis. Plays a role in the organization of apical filamentous actin in epithelial cells of the developing embryo. May play a role in let-60-mediated vulval development. May induce nuclear condensation. Positively regulates the oxidative stress response, and this may be in association with the small GTPase rab-39. Not required for muscle integrity. The polypeptide is Ras association domain-containing protein 1 homolog (Caenorhabditis elegans).